Consider the following 134-residue polypeptide: Small ribosomal subunit protein bS6 (134 aa).

Basic and acidic residues predominate over residues 113–122 (NRDIKEKEQP). Positions 113-134 (NRDIKEKEQPSESNVDADLKVN) are disordered.

The protein belongs to the bacterial ribosomal protein bS6 family.

Its function is as follows. Binds together with bS18 to 16S ribosomal RNA. This Borrelia duttonii (strain Ly) protein is Small ribosomal subunit protein bS6.